Here is a 545-residue protein sequence, read N- to C-terminus: Glucose-6-phosphate isomerase (545 aa).

The Proton donor role is filled by Glu351. Active-site residues include His382 and Lys510.

It belongs to the GPI family.

Its subcellular location is the cytoplasm. The catalysed reaction is alpha-D-glucose 6-phosphate = beta-D-fructose 6-phosphate. It participates in carbohydrate biosynthesis; gluconeogenesis. Its pathway is carbohydrate degradation; glycolysis; D-glyceraldehyde 3-phosphate and glycerone phosphate from D-glucose: step 2/4. Functionally, catalyzes the reversible isomerization of glucose-6-phosphate to fructose-6-phosphate. The sequence is that of Glucose-6-phosphate isomerase from Shewanella baltica (strain OS195).